Consider the following 1058-residue polypeptide: Leucine--tRNA ligase, cytoplasmic (1058 aa).

The short motif at 48–58 (PYMNGRLHVGH) is the 'HIGH' region element. Positions 711-715 (KMSKS) match the 'KMSKS' region motif. ATP is bound at residue Lys714.

It belongs to the class-I aminoacyl-tRNA synthetase family.

It is found in the cytoplasm. It carries out the reaction tRNA(Leu) + L-leucine + ATP = L-leucyl-tRNA(Leu) + AMP + diphosphate. The sequence is that of Leucine--tRNA ligase, cytoplasmic (leuS) from Dictyostelium discoideum (Social amoeba).